Consider the following 638-residue polypeptide: 1-deoxy-D-xylulose-5-phosphate synthase (638 aa).

Thiamine diphosphate contacts are provided by residues H75 and 116–118 (AHS). D147 is a Mg(2+) binding site. Thiamine diphosphate-binding positions include 148 to 149 (GA), N177, Y288, and E370. Position 177 (N177) interacts with Mg(2+).

It belongs to the transketolase family. DXPS subfamily. In terms of assembly, homodimer. Requires Mg(2+) as cofactor. The cofactor is thiamine diphosphate.

The catalysed reaction is D-glyceraldehyde 3-phosphate + pyruvate + H(+) = 1-deoxy-D-xylulose 5-phosphate + CO2. Its pathway is metabolic intermediate biosynthesis; 1-deoxy-D-xylulose 5-phosphate biosynthesis; 1-deoxy-D-xylulose 5-phosphate from D-glyceraldehyde 3-phosphate and pyruvate: step 1/1. Functionally, catalyzes the acyloin condensation reaction between C atoms 2 and 3 of pyruvate and glyceraldehyde 3-phosphate to yield 1-deoxy-D-xylulose-5-phosphate (DXP). The polypeptide is 1-deoxy-D-xylulose-5-phosphate synthase (Cupriavidus necator (strain ATCC 17699 / DSM 428 / KCTC 22496 / NCIMB 10442 / H16 / Stanier 337) (Ralstonia eutropha)).